The chain runs to 45 residues: uncharacterized protein (45 aa).

The C2H2-type zinc finger occupies Tyr2 to His25.

This is an uncharacterized protein from Sulfolobus spindle-shape virus 1 (SSV1).